Reading from the N-terminus, the 317-residue chain is Gamma-glutamyl hydrolase (317 aa).

An N-terminal signal peptide occupies residues 1–24; it reads MANLGYLLCLLGLLLCGLSSPGMS. A Gamma-glutamyl hydrolase domain is found at 25–317; that stretch reads RPYNHGSERP…SSFQQAYMFD (293 aa). A glycan (N-linked (GlcNAc...) (high mannose) asparagine) is linked at N100. Residue C133 is the Nucleophile of the active site. Residues N162 and N188 are each glycosylated (N-linked (GlcNAc...) (high mannose) asparagine). N202 carries an N-linked (GlcNAc...) asparagine glycan. The Proton donor role is filled by H243. N306 is a glycosylation site (N-linked (GlcNAc...) asparagine).

This sequence belongs to the peptidase C26 family. As to quaternary structure, homodimer. As to expression, isoform I (more expressed than isoform II in all tissues) is highly expressed in salivary gland, followed by kidney, liver, lung, stomach and uterus, and weakly expressed in small intestine, brain and fetal liver. Also expressed at a lower level in thymus, spleen and skeletal muscle. Also expressed in tumors.

Its subcellular location is the secreted. The protein resides in the extracellular space. It localises to the lysosome. It is found in the melanosome. The enzyme catalyses (6S)-5,6,7,8-tetrahydrofolyl-(gamma-L-Glu)(n) + (n-1) H2O = (6S)-5,6,7,8-tetrahydrofolate + (n-1) L-glutamate. Its function is as follows. Hydrolyzes the polyglutamate sidechains of pteroylpolyglutamates. Progressively removes gamma-glutamyl residues from pteroylpoly-gamma-glutamate to yield pteroyl-alpha-glutamate (folic acid) and free glutamate. May play an important role in the bioavailability of dietary pteroylpolyglutamates and in the metabolism of pteroylpolyglutamates and antifolates. This Mus musculus (Mouse) protein is Gamma-glutamyl hydrolase (Ggh).